The primary structure comprises 584 residues: Alkaline nuclease (584 aa).

The tract at residues 409–430 (GGGADHHLRGSPGDSPPPIPFE) is disordered.

The protein belongs to the herpesviridae alkaline nuclease family. Interacts with major DNA-binding protein; this interaction increases the nuclease processivity of the alkaline exonuclease.

The protein localises to the host nucleus. The protein resides in the host cytoplasm. Plays a role in processing non linear or branched viral DNA intermediates in order to promote the production of mature packaged unit-length linear progeny viral DNA molecules. Exhibits endonuclease and exonuclease activities and accepts both double-stranded and single-stranded DNA as substrate. Exonuclease digestion of DNA is in the 5'-&gt; 3' direction and the products are 5'-monophosphate nucleosides. Additionally, forms a recombinase with the major DNA-binding protein, which displays strand exchange activity. The protein is Alkaline nuclease (UL98) of Human cytomegalovirus (strain AD169) (HHV-5).